The sequence spans 130 residues: Small ribosomal subunit protein uS9 (130 aa).

This sequence belongs to the universal ribosomal protein uS9 family.

The sequence is that of Small ribosomal subunit protein uS9 from Tolumonas auensis (strain DSM 9187 / NBRC 110442 / TA 4).